Consider the following 566-residue polypeptide: F-box/WD repeat-containing protein 5 (566 aa).

One can recognise an F-box domain in the interval 3–49 (EGGTPLLPDSLVYQIFLSLGPADVLAAGLVCRQWQAVSRDEFLWREQ). 4 WD repeats span residues 83–125 (VEVQ…DLTI), 126–178 (SLLH…LDSF), 179–238 (ALLS…VKRL), and 239–281 (FKIQ…RIFD). The residue at position 151 (S151) is a Phosphoserine; by PLK4. The residue at position 284 (S284) is a Phosphoserine. Residues 303-311 (RHFLDRVLE) carry the D-box motif. WD repeat units follow at residues 394 to 447 (ALDH…DLLV), 458 to 501 (RALR…RHYN), and 502 to 539 (ICLA…KAWR).

This sequence belongs to the FBXW5 family. Part of the SCF (SKP1-CUL1-F-box) E3 ubiquitin-protein ligase complex SCF(FBXW5) composed of CUL1, SKP1, RBX1 and FBXW5. Component of the DCX(FBXW5) E3 ubiquitin ligase complex, at least composed of (CUL4A or CUL4B), DDB1, FBXW5 and RBX1. Interacts with CDC20, EPS8, TSC1, TSC2 and SASS6. Interacts with TNFAIP8L1; TNFAIP8L1 competes with TSC2 to bind FBXW5 increasing TSC2 stability by preventing its ubiquitination. Post-translationally, phosphorylated at Ser-151 by PLK4 during the G1/S transition, leading to inhibit its ability to ubiquitinate SASS6. In terms of processing, ubiquitinated and degraded by the APC/C complex during mitosis and G1 phase.

The protein localises to the cytoplasm. The protein operates within protein modification; protein ubiquitination. In terms of biological role, substrate recognition component of both SCF (SKP1-CUL1-F-box protein) and DCX (DDB1-CUL4-X-box) E3 ubiquitin-protein ligase complexes. Substrate recognition component of the SCF(FBXW5) E3 ubiquitin-protein ligase complex which mediates the ubiquitination and subsequent proteasomal degradation of SASS6 during S phase, leading to prevent centriole reduplication. The SCF(FBXW5) complex also mediates ubiquitination and degradation of actin-regulator EPS8 during G2 phase, leading to the transient degradation of EPS8 and subsequent cell shape changes required to allow mitotic progression. Substrate-specific adapter of the DCX(FBXW5) E3 ubiquitin-protein ligase complex which mediates the polyubiquitination and subsequent degradation of TSC2. May also act as a negative regulator of MAP3K7/TAK1 signaling in the interleukin-1B (IL1B) signaling pathway. The chain is F-box/WD repeat-containing protein 5 (FBXW5) from Homo sapiens (Human).